A 280-amino-acid polypeptide reads, in one-letter code: uncharacterized protein (280 aa).

3 helical membrane passes run 15–35 (IVDI…INRL), 68–88 (IGFI…ILAG), and 94–114 (IVIG…VFLI).

It belongs to the MscS (TC 1.A.23) family.

It localises to the cell membrane. May play a role in resistance to osmotic downshock. This is an uncharacterized protein from Bacillus subtilis (strain 168).